A 154-amino-acid polypeptide reads, in one-letter code: Iron-sulfur cluster assembly 2 homolog, mitochondrial (154 aa).

The N-terminal 8 residues, 1–8 (MAAARGLS), are a transit peptide targeting the mitochondrion. Fe cation is bound by residues Cys79, Cys144, and Cys146.

Belongs to the HesB/IscA family. Heterotetramer; forms a dimer of dimers with IBA57. Interacts with [2Fe-2S]-ISCA2 forming the heterodimer [2Fe- 2S]-ISCA2-IBA57 complex; [2Fe-2S] cluster binding is absolutely required to promote the complex formation.

The protein localises to the mitochondrion. Functionally, involved in the maturation of mitochondrial 4Fe-4S proteins functioning late in the iron-sulfur cluster assembly pathway. May be involved in the binding of an intermediate of Fe/S cluster assembly. The polypeptide is Iron-sulfur cluster assembly 2 homolog, mitochondrial (ISCA2) (Pongo abelii (Sumatran orangutan)).